Here is a 1006-residue protein sequence, read N- to C-terminus: uncharacterized protein (1006 aa).

Positions 326–371 are disordered; sequence EMEKKRPRSPELVPKKIVMEKERPSSPDSEAEEREHNLRIEKERHQ. Basic and acidic residues-rich tracts occupy residues 338–350 and 358–371; these read VPKK…ERPS and EREH…ERHQ. Coiled coils occupy residues 358-473 and 756-782; these read EREH…ARLA and EVQK…AFGR.

This is an uncharacterized protein from Caenorhabditis elegans.